A 143-amino-acid polypeptide reads, in one-letter code: MRKVDLCSVTEGTEVILATSSDEKHPPENIIDGNPETFWTTTGMFPQEFIICFHKHVKIEKLVIQSYLVRTLRIEKTTSKEPLDFEQWVEKDLVHTEGQLQNEEIVARDGYATFLRFIIVSAFDHFASVHSISAEGLTVSSLP.

3 residues coordinate Ca(2+): Asn-29, Asp-32, and Thr-37.

Belongs to the IFT25 family. Component of the IFT complex B, at least composed of IFT20, IFT22, IFT25, IFT27, IFT46, IFT52, TRAF3IP1/IFT54, IFT57, IFT74, IFT80, IFT81, and IFT88. Interacts with IFT27. Interacts with IFT88. As to expression, expressed predominantly in the testis (at protein level).

It is found in the cell projection. The protein localises to the cilium. Its function is as follows. Component of the IFT complex B required for sonic hedgehog/SHH signaling. May mediate transport of SHH components: required for the export of SMO and PTCH1 receptors out of the cilium and the accumulation of GLI2 at the ciliary tip in response to activation of the SHH pathway, suggesting it is involved in the dynamic transport of SHH signaling molecules within the cilium. Not required for ciliary assembly. Its role in intraflagellar transport is mainly seen in tissues rich in ciliated cells such as kidney and testis. Essential for male fertility, spermiogenesis and sperm flagella formation. Plays a role in the early development of the kidney. May be involved in the regulation of ureteric bud initiation. The chain is Intraflagellar transport protein 25 homolog (Ift25) from Mus musculus (Mouse).